Reading from the N-terminus, the 733-residue chain is MDKIWRELGLTDEEYEKIISILGREPNITEIGMYSVMWSEHCAYKNSKPLLKYLPTKGERVIQGPGENAGVLDIGDNLAVVMKIESHNHPSAIEPYQGAATGVGGIIRDIFTMGARPIALLDSLRFGIPDDKRTKYLIENVVAGIADYGNCIGIPTVGGDTYFEESYKGNPLVNAMCVGIVEKDKIKKGIAKGIGNPVMIVGATTGRDGIGGASFASQELSEESEEKRPSVQVGDPFMEKLLLEACLELFETDAVVAIQDMGAAGLTSSSCEMASRGGVGMELDLDKVPLREKGMTPYEIMLSESQERMLVVVEKGKEEDVQKVFKKWGLNAATIGKITDDGMIRVIKEGKIVAEVPAKSLAEDAPQYIREEEVPKWQEDVNKLNINEVKPPEDMNKALKDVISSLNIASKEWIYSQYDYMVRTDTAITPGMDAAVVRIKGTKKAIALTTDCNGRYCYLDPYIGSQIAVAEAARNLCMVGAKPIGVTDCLNFGNPEKKEIYWQLKNSIFGIAKACETLQIPVVSGNVSLYNENEEGAIYPTPVIGMAGLIEDVSKICTMDFKKERDVIIILGENKGEIGGSEYLKVCFGMVKGQPPQIDLEEEKRLQELVLKLIDKGLINSSHDISEGGFAAALVESAISGKKGAKISLQTSLREDIELFSESPPRALITVSPEKVEEVLKIAYEYQVPAQKVGVVEGKKIAIEVNGKKIIDLPLEVLEESWRGRIKWEMERN.

Histidine 41 is an active-site residue. Positions 44 and 83 each coordinate ATP. Glutamate 85 serves as a coordination point for Mg(2+). Residues 86-89 (SHNH) and arginine 108 each bind substrate. The active-site Proton acceptor is histidine 87. Mg(2+) is bound at residue aspartate 109. Residues 212-232 (GASFASQELSEESEEKRPSVQ) form a disordered region. Glutamine 232 contributes to the substrate binding site. Residue aspartate 260 participates in Mg(2+) binding. Residue 304-306 (ESQ) coordinates substrate. ATP-binding residues include aspartate 488 and glycine 525. Residue asparagine 526 coordinates Mg(2+). Serine 528 provides a ligand contact to substrate.

It belongs to the FGAMS family. In terms of assembly, monomer. Part of the FGAM synthase complex composed of 1 PurL, 1 PurQ and 2 PurS subunits.

The protein localises to the cytoplasm. It carries out the reaction N(2)-formyl-N(1)-(5-phospho-beta-D-ribosyl)glycinamide + L-glutamine + ATP + H2O = 2-formamido-N(1)-(5-O-phospho-beta-D-ribosyl)acetamidine + L-glutamate + ADP + phosphate + H(+). Its pathway is purine metabolism; IMP biosynthesis via de novo pathway; 5-amino-1-(5-phospho-D-ribosyl)imidazole from N(2)-formyl-N(1)-(5-phospho-D-ribosyl)glycinamide: step 1/2. Its function is as follows. Part of the phosphoribosylformylglycinamidine synthase complex involved in the purines biosynthetic pathway. Catalyzes the ATP-dependent conversion of formylglycinamide ribonucleotide (FGAR) and glutamine to yield formylglycinamidine ribonucleotide (FGAM) and glutamate. The FGAM synthase complex is composed of three subunits. PurQ produces an ammonia molecule by converting glutamine to glutamate. PurL transfers the ammonia molecule to FGAR to form FGAM in an ATP-dependent manner. PurS interacts with PurQ and PurL and is thought to assist in the transfer of the ammonia molecule from PurQ to PurL. This is Phosphoribosylformylglycinamidine synthase subunit PurL from Thermoanaerobacter pseudethanolicus (strain ATCC 33223 / 39E) (Clostridium thermohydrosulfuricum).